Reading from the N-terminus, the 874-residue chain is Leucine--tRNA ligase (874 aa).

The 'HIGH' region motif lies at 43–53; sequence PYPSGRIHIGH. The short motif at 630-634 is the 'KMSKS' region element; it reads KMSKS. An ATP-binding site is contributed by K633.

This sequence belongs to the class-I aminoacyl-tRNA synthetase family.

Its subcellular location is the cytoplasm. The enzyme catalyses tRNA(Leu) + L-leucine + ATP = L-leucyl-tRNA(Leu) + AMP + diphosphate. The polypeptide is Leucine--tRNA ligase (Bradyrhizobium diazoefficiens (strain JCM 10833 / BCRC 13528 / IAM 13628 / NBRC 14792 / USDA 110)).